The sequence spans 465 residues: Lactaldehyde dehydrogenase (465 aa).

220 to 225 (GSVEVG) is a binding site for NAD(+). Catalysis depends on residues E240 and C274.

Belongs to the aldehyde dehydrogenase family. Homotetramer.

The enzyme catalyses (S)-lactaldehyde + NAD(+) + H2O = (S)-lactate + NADH + 2 H(+). It participates in cofactor biosynthesis; coenzyme F420 biosynthesis. Functionally, involved in F420 biosynthesis through the oxidation of lactaldehyde to lactate. In Methanococcus maripaludis (strain DSM 14266 / JCM 13030 / NBRC 101832 / S2 / LL), this protein is Lactaldehyde dehydrogenase.